We begin with the raw amino-acid sequence, 86 residues long: MSVMLRRLVVLPVRFYQYCISPLFPPACRYVPTCSAYTAEAVMRHGVMRGLWLAARRILRCHPWCAGGHDPVPPVPPQRYPSAQEH.

The tract at residues Ala-66–His-86 is disordered.

It belongs to the UPF0161 family.

It localises to the cell inner membrane. Could be involved in insertion of integral membrane proteins into the membrane. The protein is Putative membrane protein insertion efficiency factor of Nitratidesulfovibrio vulgaris (strain ATCC 29579 / DSM 644 / CCUG 34227 / NCIMB 8303 / VKM B-1760 / Hildenborough) (Desulfovibrio vulgaris).